We begin with the raw amino-acid sequence, 510 residues long: uncharacterized protein (510 aa).

This sequence belongs to the phage portal family. PBSX subfamily.

This is an uncharacterized protein from Bacillus subtilis (strain 168).